A 233-amino-acid polypeptide reads, in one-letter code: MIIPHRADGGKNDVSAAELLKDERAARGWLTQAFAPSTEQWAQIERFVTMLIAENAKQNLIAASTIPAIWARHIADSAQLLALDTREGEGLWIDLGSGPGLPGLVVAILSERPMLLVESRRRRCDFLRAVVAELALDHVEVAEAPLERVATRPAATISARAFAPLDRLIDLSARFSTESTRWLLPKGRNAVKELALLPEPWQRMFHVEQSRTDAESGILVGTGRIAPKKRGKA.

S-adenosyl-L-methionine-binding positions include G96, L101, 146 to 147 (LE), and R160.

It belongs to the methyltransferase superfamily. RNA methyltransferase RsmG family.

The protein resides in the cytoplasm. The enzyme catalyses guanosine(527) in 16S rRNA + S-adenosyl-L-methionine = N(7)-methylguanosine(527) in 16S rRNA + S-adenosyl-L-homocysteine. Its function is as follows. Specifically methylates the N7 position of guanine in position 527 of 16S rRNA. This is Ribosomal RNA small subunit methyltransferase G from Sphingopyxis alaskensis (strain DSM 13593 / LMG 18877 / RB2256) (Sphingomonas alaskensis).